The sequence spans 176 residues: Retinol-binding protein 4-B (176 aa).

Residue serine 1 is modified to N-acetylserine. Disulfide bonds link cysteine 3–cysteine 159, cysteine 69–cysteine 173, and cysteine 119–cysteine 128. Glutamine 97 serves as a coordination point for substrate.

This sequence belongs to the calycin superfamily. Lipocalin family.

It is found in the secreted. Its function is as follows. RBP delivers retinol from the liver stores to the peripheral tissues. In plasma, the RBP-retinol complex interacts with transthyretin, this prevents its loss by filtration through the kidney glomeruli. The polypeptide is Retinol-binding protein 4-B (rbp4b) (Oncorhynchus mykiss (Rainbow trout)).